The chain runs to 136 residues: Large ribosomal subunit protein uL16 (136 aa).

The protein belongs to the universal ribosomal protein uL16 family. As to quaternary structure, part of the 50S ribosomal subunit.

Its function is as follows. Binds 23S rRNA and is also seen to make contacts with the A and possibly P site tRNAs. This Buchnera aphidicola subsp. Cinara cedri (strain Cc) protein is Large ribosomal subunit protein uL16.